A 457-amino-acid chain; its full sequence is Bifunctional protein GlmU (457 aa).

A pyrophosphorylase region spans residues 1–229 (MYNCAIILAA…YEEIMGVNSR (229 aa)). UDP-N-acetyl-alpha-D-glucosamine contacts are provided by residues 8–11 (LAAG), Lys22, Gln73, and 78–79 (GT). Asp103 provides a ligand contact to Mg(2+). Residues Gly140, Glu155, Asn170, and Asn227 each contribute to the UDP-N-acetyl-alpha-D-glucosamine site. Asn227 is a binding site for Mg(2+). Residues 230–250 (VQLSEAEIVMRKRINHKHMVN) are linker. Residues 251–457 (GVTFIDCEST…WLDKKGLLKK (207 aa)) are N-acetyltransferase. Residues Arg332 and Lys350 each coordinate UDP-N-acetyl-alpha-D-glucosamine. His362 functions as the Proton acceptor in the catalytic mechanism. UDP-N-acetyl-alpha-D-glucosamine contacts are provided by Tyr365 and Asn376. Residues 385–386 (NY), Ala422, and Arg439 contribute to the acetyl-CoA site.

It in the N-terminal section; belongs to the N-acetylglucosamine-1-phosphate uridyltransferase family. In the C-terminal section; belongs to the transferase hexapeptide repeat family. As to quaternary structure, homotrimer. Mg(2+) is required as a cofactor.

The protein resides in the cytoplasm. The catalysed reaction is alpha-D-glucosamine 1-phosphate + acetyl-CoA = N-acetyl-alpha-D-glucosamine 1-phosphate + CoA + H(+). It catalyses the reaction N-acetyl-alpha-D-glucosamine 1-phosphate + UTP + H(+) = UDP-N-acetyl-alpha-D-glucosamine + diphosphate. It functions in the pathway nucleotide-sugar biosynthesis; UDP-N-acetyl-alpha-D-glucosamine biosynthesis; N-acetyl-alpha-D-glucosamine 1-phosphate from alpha-D-glucosamine 6-phosphate (route II): step 2/2. The protein operates within nucleotide-sugar biosynthesis; UDP-N-acetyl-alpha-D-glucosamine biosynthesis; UDP-N-acetyl-alpha-D-glucosamine from N-acetyl-alpha-D-glucosamine 1-phosphate: step 1/1. It participates in bacterial outer membrane biogenesis; LPS lipid A biosynthesis. In terms of biological role, catalyzes the last two sequential reactions in the de novo biosynthetic pathway for UDP-N-acetylglucosamine (UDP-GlcNAc). The C-terminal domain catalyzes the transfer of acetyl group from acetyl coenzyme A to glucosamine-1-phosphate (GlcN-1-P) to produce N-acetylglucosamine-1-phosphate (GlcNAc-1-P), which is converted into UDP-GlcNAc by the transfer of uridine 5-monophosphate (from uridine 5-triphosphate), a reaction catalyzed by the N-terminal domain. This Clostridium botulinum (strain Loch Maree / Type A3) protein is Bifunctional protein GlmU.